The primary structure comprises 1210 residues: DNA-directed RNA polymerase II subunit RPB2 (1210 aa).

Residue aspartate 826 coordinates Mg(2+). Zn(2+) contacts are provided by cysteine 1152, cysteine 1155, cysteine 1170, and cysteine 1173. The segment at 1152-1173 (CDICGLIAIASYKKDSYECRSC) adopts a C4-type zinc-finger fold.

This sequence belongs to the RNA polymerase beta chain family. Component of the RNA polymerase II (Pol II) complex consisting of 12 subunits.

The protein resides in the nucleus. It catalyses the reaction RNA(n) + a ribonucleoside 5'-triphosphate = RNA(n+1) + diphosphate. Functionally, DNA-dependent RNA polymerase catalyzes the transcription of DNA into RNA using the four ribonucleoside triphosphates as substrates. Second largest component of RNA polymerase II which synthesizes mRNA precursors and many functional non-coding RNAs. Proposed to contribute to the polymerase catalytic activity and forms the polymerase active center together with the largest subunit. Pol II is the central component of the basal RNA polymerase II transcription machinery. It is composed of mobile elements that move relative to each other. RPB2 is part of the core element with the central large cleft, the clamp element that moves to open and close the cleft and the jaws that are thought to grab the incoming DNA template. The protein is DNA-directed RNA polymerase II subunit RPB2 (rpb2) of Schizosaccharomyces pombe (strain 972 / ATCC 24843) (Fission yeast).